The following is a 441-amino-acid chain: Ribosomal protein uS12 methylthiotransferase RimO (441 aa).

Positions 8-118 (PKIGFVSLGC…VLQHVHHYVP (111 aa)) constitute an MTTase N-terminal domain. Residues Cys-17, Cys-53, Cys-82, Cys-150, Cys-154, and Cys-157 each contribute to the [4Fe-4S] cluster site. In terms of domain architecture, Radical SAM core spans 136–373 (LTPRHYAYLK…MQLQQQISAE (238 aa)). In terms of domain architecture, TRAM spans 376–441 (QEKVGREILV…DEYDLWGSRV (66 aa)).

This sequence belongs to the methylthiotransferase family. RimO subfamily. Requires [4Fe-4S] cluster as cofactor.

The protein resides in the cytoplasm. It catalyses the reaction L-aspartate(89)-[ribosomal protein uS12]-hydrogen + (sulfur carrier)-SH + AH2 + 2 S-adenosyl-L-methionine = 3-methylsulfanyl-L-aspartate(89)-[ribosomal protein uS12]-hydrogen + (sulfur carrier)-H + 5'-deoxyadenosine + L-methionine + A + S-adenosyl-L-homocysteine + 2 H(+). In terms of biological role, catalyzes the methylthiolation of an aspartic acid residue of ribosomal protein uS12. The sequence is that of Ribosomal protein uS12 methylthiotransferase RimO from Salmonella heidelberg (strain SL476).